Here is a 246-residue protein sequence, read N- to C-terminus: Ribonuclease PH (246 aa).

Residues Arg91 and 129 to 131 (GTR) each bind phosphate.

The protein belongs to the RNase PH family. As to quaternary structure, homohexameric ring arranged as a trimer of dimers.

The enzyme catalyses tRNA(n+1) + phosphate = tRNA(n) + a ribonucleoside 5'-diphosphate. In terms of biological role, phosphorolytic 3'-5' exoribonuclease that plays an important role in tRNA 3'-end maturation. Removes nucleotide residues following the 3'-CCA terminus of tRNAs; can also add nucleotides to the ends of RNA molecules by using nucleoside diphosphates as substrates, but this may not be physiologically important. Probably plays a role in initiation of 16S rRNA degradation (leading to ribosome degradation) during starvation. The chain is Ribonuclease PH from Burkholderia orbicola (strain MC0-3).